A 163-amino-acid polypeptide reads, in one-letter code: Lipoprotein signal peptidase (163 aa).

3 helical membrane passes run 11–31, 63–83, and 88–108; these read ILIA…IATT, KMTF…YFFI, and YNLF…GNFI. Catalysis depends on residues Asp118 and Asp136. The helical transmembrane segment at 131-151 threads the bilayer; that stretch reads IFNIADSSLTIGVILIIIALL.

It belongs to the peptidase A8 family.

Its subcellular location is the cell membrane. The catalysed reaction is Release of signal peptides from bacterial membrane prolipoproteins. Hydrolyzes -Xaa-Yaa-Zaa-|-(S,diacylglyceryl)Cys-, in which Xaa is hydrophobic (preferably Leu), and Yaa (Ala or Ser) and Zaa (Gly or Ala) have small, neutral side chains.. It participates in protein modification; lipoprotein biosynthesis (signal peptide cleavage). Functionally, this protein specifically catalyzes the removal of signal peptides from prolipoproteins. The polypeptide is Lipoprotein signal peptidase (Staphylococcus aureus).